The chain runs to 603 residues: DNA mismatch repair protein MutL (603 aa).

This sequence belongs to the DNA mismatch repair MutL/HexB family.

Its function is as follows. This protein is involved in the repair of mismatches in DNA. It is required for dam-dependent methyl-directed DNA mismatch repair. May act as a 'molecular matchmaker', a protein that promotes the formation of a stable complex between two or more DNA-binding proteins in an ATP-dependent manner without itself being part of a final effector complex. The chain is DNA mismatch repair protein MutL from Rhodopseudomonas palustris (strain BisA53).